A 121-amino-acid chain; its full sequence is C-X-C motif chemokine 11-6 (121 aa).

An N-terminal signal peptide occupies residues 1–20 (MKTLAAFLLLSCLIAGEVNG). 2 disulfides stabilise this stretch: Cys-29-Cys-56 and Cys-31-Cys-73. A disordered region spans residues 95 to 121 (QSVPHSTTTGTVKSSMTSSTSAPTAFK). The span at 100 to 115 (STTTGTVKSSMTSSTS) shows a compositional bias: low complexity.

Belongs to the intercrine alpha (chemokine CxC) family.

Its subcellular location is the secreted. Ligand for cxcr3.2. Chemotactic for macrophages. The polypeptide is C-X-C motif chemokine 11-6 (Danio rerio (Zebrafish)).